Consider the following 497-residue polypeptide: Probable cytosol aminopeptidase (497 aa).

The Mn(2+) site is built by lysine 264 and aspartate 269. The active site involves lysine 276. The Mn(2+) site is built by aspartate 287, aspartate 346, and glutamate 348. Residue arginine 350 is part of the active site.

It belongs to the peptidase M17 family. Mn(2+) serves as cofactor.

It localises to the cytoplasm. The enzyme catalyses Release of an N-terminal amino acid, Xaa-|-Yaa-, in which Xaa is preferably Leu, but may be other amino acids including Pro although not Arg or Lys, and Yaa may be Pro. Amino acid amides and methyl esters are also readily hydrolyzed, but rates on arylamides are exceedingly low.. The catalysed reaction is Release of an N-terminal amino acid, preferentially leucine, but not glutamic or aspartic acids.. In terms of biological role, presumably involved in the processing and regular turnover of intracellular proteins. Catalyzes the removal of unsubstituted N-terminal amino acids from various peptides. The chain is Probable cytosol aminopeptidase from Persephonella marina (strain DSM 14350 / EX-H1).